The following is a 206-amino-acid chain: MIRSLGKIVPETSALFICDIQSKFANHIFKFNGVVNQSKYMMRVCNELKVPIIFTEQYPKGLGHTFEDLLKERNENNQTKIFEKTLYSMCTNEVLNHLKQNHKDLKSILITGIETHVCVLQSTLDFLENGYDVHILSDAVSSNNNNDRLIALERMRQSGAFITTTESIIFQLTRDATHKSFKSIVPITKQRRDDLVADPSLSLSKM.

It belongs to the isochorismatase family.

This Dictyostelium discoideum (Social amoeba) protein is Isochorismatase family protein 1B.